A 173-amino-acid polypeptide reads, in one-letter code: ATP synthase subunit b (173 aa).

A helical membrane pass occupies residues 12 to 34 (AFGNLYAIGWSAVNFLVLLALMY).

This sequence belongs to the ATPase B chain family. F-type ATPases have 2 components, F(1) - the catalytic core - and F(0) - the membrane proton channel. F(1) has five subunits: alpha(3), beta(3), gamma(1), delta(1), epsilon(1). F(0) has three main subunits: a(1), b(2) and c(10-14). The alpha and beta chains form an alternating ring which encloses part of the gamma chain. F(1) is attached to F(0) by a central stalk formed by the gamma and epsilon chains, while a peripheral stalk is formed by the delta and b chains.

The protein resides in the cell membrane. Functionally, f(1)F(0) ATP synthase produces ATP from ADP in the presence of a proton or sodium gradient. F-type ATPases consist of two structural domains, F(1) containing the extramembraneous catalytic core and F(0) containing the membrane proton channel, linked together by a central stalk and a peripheral stalk. During catalysis, ATP synthesis in the catalytic domain of F(1) is coupled via a rotary mechanism of the central stalk subunits to proton translocation. Its function is as follows. Component of the F(0) channel, it forms part of the peripheral stalk, linking F(1) to F(0). The polypeptide is ATP synthase subunit b (Syntrophomonas wolfei subsp. wolfei (strain DSM 2245B / Goettingen)).